The sequence spans 417 residues: UDP-N-acetylglucosamine 1-carboxyvinyltransferase (417 aa).

22–23 (KN) contributes to the phosphoenolpyruvate binding site. Arg-91 lines the UDP-N-acetyl-alpha-D-glucosamine pocket. Cys-115 (proton donor) is an active-site residue. Residue Cys-115 is modified to 2-(S-cysteinyl)pyruvic acid O-phosphothioketal. Residues 120–124 (RPVDQ), Asp-304, and Ile-326 contribute to the UDP-N-acetyl-alpha-D-glucosamine site.

This sequence belongs to the EPSP synthase family. MurA subfamily.

It localises to the cytoplasm. The catalysed reaction is phosphoenolpyruvate + UDP-N-acetyl-alpha-D-glucosamine = UDP-N-acetyl-3-O-(1-carboxyvinyl)-alpha-D-glucosamine + phosphate. The protein operates within cell wall biogenesis; peptidoglycan biosynthesis. Cell wall formation. Adds enolpyruvyl to UDP-N-acetylglucosamine. The protein is UDP-N-acetylglucosamine 1-carboxyvinyltransferase of Desulfovibrio desulfuricans (strain ATCC 27774 / DSM 6949 / MB).